A 91-amino-acid chain; its full sequence is Small ribosomal subunit protein uS19 (91 aa).

Belongs to the universal ribosomal protein uS19 family.

Protein S19 forms a complex with S13 that binds strongly to the 16S ribosomal RNA. The chain is Small ribosomal subunit protein uS19 from Cupriavidus pinatubonensis (strain JMP 134 / LMG 1197) (Cupriavidus necator (strain JMP 134)).